The chain runs to 354 residues: Protein-arginine kinase (354 aa).

The region spanning 24 to 254 (IVLSSRIRLA…QQIIHQEKTA (231 aa)) is the Phosphagen kinase C-terminal domain. Residues 27-31 (SSRIR), His92, Arg125, 176-180 (RASVM), and 207-212 (RGIYGE) each bind ATP. The short motif at 337 to 342 (RDYRRA) is the RDXXRA motif of the pArg binding pocket involved in allosteric regulation element.

The protein belongs to the ATP:guanido phosphotransferase family.

The enzyme catalyses L-arginyl-[protein] + ATP = N(omega)-phospho-L-arginyl-[protein] + ADP + H(+). Its activity is regulated as follows. Appears to be allosterically activated by the binding of pArg-containing polypeptides to the pArg-binding pocket localized in the C-terminal domain of McsB. Catalyzes the specific phosphorylation of arginine residues in a large number of proteins. Is part of the bacterial stress response system. Protein arginine phosphorylation has a physiologically important role and is involved in the regulation of many critical cellular processes, such as protein homeostasis, motility, competence, and stringent and stress responses, by regulating gene expression and protein activity. The protein is Protein-arginine kinase of Bacillus mycoides (strain KBAB4) (Bacillus weihenstephanensis).